The chain runs to 344 residues: Anthranilate phosphoribosyltransferase (344 aa).

5-phospho-alpha-D-ribose 1-diphosphate-binding positions include glycine 86, 89 to 90 (GD), threonine 94, 96 to 99 (NIST), 114 to 122 (KHGNKSASG), and serine 126. Residue glycine 86 participates in anthranilate binding. Residue serine 98 coordinates Mg(2+). Position 117 (asparagine 117) interacts with anthranilate. Arginine 172 is a binding site for anthranilate. Mg(2+)-binding residues include aspartate 231 and glutamate 232.

Belongs to the anthranilate phosphoribosyltransferase family. Homodimer. Mg(2+) serves as cofactor.

It carries out the reaction N-(5-phospho-beta-D-ribosyl)anthranilate + diphosphate = 5-phospho-alpha-D-ribose 1-diphosphate + anthranilate. It participates in amino-acid biosynthesis; L-tryptophan biosynthesis; L-tryptophan from chorismate: step 2/5. Catalyzes the transfer of the phosphoribosyl group of 5-phosphorylribose-1-pyrophosphate (PRPP) to anthranilate to yield N-(5'-phosphoribosyl)-anthranilate (PRA). In Prochlorococcus marinus (strain MIT 9301), this protein is Anthranilate phosphoribosyltransferase.